The following is a 941-amino-acid chain: UvrABC system protein A (941 aa).

37-44 provides a ligand contact to ATP; it reads GLSGSGKS. The C4-type zinc finger occupies 260–287; the sequence is CFKCKMSFEELEPLSFSFNSPKGACESC. 2 consecutive ABC transporter domains span residues 316-585 and 605-937; these read IFGY…NNHS and KEKH…KFLA. ATP is bound at residue 637–644; it reads GVSGSGKS. The C4-type zinc finger occupies 737–763; sequence CEKCQGDGDIKIEMHFLPDVLVQCDSC.

This sequence belongs to the ABC transporter superfamily. UvrA family. As to quaternary structure, forms a heterotetramer with UvrB during the search for lesions.

It is found in the cytoplasm. In terms of biological role, the UvrABC repair system catalyzes the recognition and processing of DNA lesions. UvrA is an ATPase and a DNA-binding protein. A damage recognition complex composed of 2 UvrA and 2 UvrB subunits scans DNA for abnormalities. When the presence of a lesion has been verified by UvrB, the UvrA molecules dissociate. The chain is UvrABC system protein A from Helicobacter pylori (strain J99 / ATCC 700824) (Campylobacter pylori J99).